Here is a 297-residue protein sequence, read N- to C-terminus: Homoserine kinase (297 aa).

Residue 82-92 (PVSRGLGSSAA) coordinates ATP.

The protein belongs to the GHMP kinase family. Homoserine kinase subfamily.

Its subcellular location is the cytoplasm. The enzyme catalyses L-homoserine + ATP = O-phospho-L-homoserine + ADP + H(+). It functions in the pathway amino-acid biosynthesis; L-threonine biosynthesis; L-threonine from L-aspartate: step 4/5. Its function is as follows. Catalyzes the ATP-dependent phosphorylation of L-homoserine to L-homoserine phosphate. The polypeptide is Homoserine kinase (Clostridium botulinum (strain Langeland / NCTC 10281 / Type F)).